Consider the following 419-residue polypeptide: Glucose-1-phosphate adenylyltransferase (419 aa).

Alpha-D-glucose 1-phosphate-binding positions include Tyr107, Gly172, 187–188 (EK), and Ser205.

This sequence belongs to the bacterial/plant glucose-1-phosphate adenylyltransferase family. Homotetramer.

It catalyses the reaction alpha-D-glucose 1-phosphate + ATP + H(+) = ADP-alpha-D-glucose + diphosphate. Its pathway is glycan biosynthesis; glycogen biosynthesis. In terms of biological role, involved in the biosynthesis of ADP-glucose, a building block required for the elongation reactions to produce glycogen. Catalyzes the reaction between ATP and alpha-D-glucose 1-phosphate (G1P) to produce pyrophosphate and ADP-Glc. The sequence is that of Glucose-1-phosphate adenylyltransferase from Novosphingobium aromaticivorans (strain ATCC 700278 / DSM 12444 / CCUG 56034 / CIP 105152 / NBRC 16084 / F199).